Here is a 93-residue protein sequence, read N- to C-terminus: Acylphosphatase (93 aa).

A disulfide bond links Cys-5 and Cys-49. Residues 5–93 form the Acylphosphatase-like domain; the sequence is CIIAWVYGRV…ETLTGFSIRY (89 aa). Active-site residues include Arg-20 and Asn-38.

Belongs to the acylphosphatase family.

It catalyses the reaction an acyl phosphate + H2O = a carboxylate + phosphate + H(+). The protein is Acylphosphatase of Salmonella typhi.